The chain runs to 657 residues: MTRLAIGKPAPLGAHYDGQGVNFTLFSAHAERVELCVFDANGQEHRYDLPGHSGDIWHGYLPDARPGLRYGYRVHGPWQPAEGHRFNPAKLLIDPCARQIEGEFKDNPLLHAGHNEPDYRDNAAIAPKCVVVVDHYDWEDDAPPRTPWGSTIIYEAHVKGLTYLHPEIPVEIRGTYKALGHPVMINYLKQLGITALELLPVAQFASEPRLQRMGLSNYWGYNPVAMFALHPAYACSPETALHEFRDAIKALHKAGIEVILDIVLNHSAELDLDGPLFSLRGIDNRSYYWIREDGDYHNWTGCGNTLNLSHPAVVDYACACLRYWVETCHVDGFRFDLAAVMGRTPEFRQDAPLFTAIQNCPVLSQVKLIAEPWDIALGGYQVGNFPPLFAEWNDHFRDAARRFWLHYDLPLGAFAGRFAASSDVFKRNGRLPSAAINLVTAHDGFTLRDCVCFNHKHNEANGEENRDGTNNNYSNNHGKEGLGGSLDLVERRRDSIHALLTTLLLSQGTPMLLAGDEHGHSQHGNNNAYCQDNQLTWLDWSQASSGLTAFTAALIHLRKRIPALVENRWWEEGDGNVRWLNRYAQPLSTDEWQNGPKQLQILLSDRFLIAINATLEVTEIVLPAGEWHAIPPFAGEDNPVITAVWQGPAHGLCVFQR.

D336 functions as the Nucleophile in the catalytic mechanism. The active-site Proton donor is the E371. Positions 458–467 (NEANGEENRD) are enriched in basic and acidic residues. Residues 458-479 (NEANGEENRDGTNNNYSNNHGK) are disordered.

Belongs to the glycosyl hydrolase 13 family.

The enzyme catalyses Hydrolysis of (1-&gt;6)-alpha-D-glucosidic linkages to branches with degrees of polymerization of three or four glucose residues in limit dextrin.. It participates in glycan degradation; glycogen degradation. Removes maltotriose and maltotetraose chains that are attached by 1,6-alpha-linkage to the limit dextrin main chain, generating a debranched limit dextrin. The protein is Glycogen debranching enzyme of Shigella sonnei (strain Ss046).